A 412-amino-acid polypeptide reads, in one-letter code: MEERPSETNSNVDSSAQPSVAQLAGRFREHAAVARETPASKPTRRKPPCSLPLFPPKVELGQNGEEKSPSGASHPPKIKVKSSPLIEKLQANLAFDPAALLPGASPKSPGLKAIVSPFHSPPSTPSSPGIRSHPSEAEEVPVSFDQPPEGTHLPSYNKVRTRGSIKRRPPSRRFRRSQSDCGDFRDYRAVEPSQENGAREENGDDVFASKSKDPGSPQLNQEAMADGVEGTPWSAEKPRRRNTCNSTEKPEELVRTPEEANAGEKVGQNPDTASQGHPEVQAPSQTGSPEAENGCGSPREETTPGEHTDTGKATEGTASEERVADEDRLGQKSPDANMPEEEGVVREKAPQTSSGKAEGTTIAEPDTKQKEEAPLEPSCSPGADHAAGEITSEIQNEKAVSMDDIPIEDTRM.

2 disordered regions span residues 1 to 84 (MEER…KSSP) and 99 to 412 (ALLP…DTRM). Residues 7–20 (ETNSNVDSSAQPSV) show a composition bias toward polar residues. Phosphoserine occurs at positions 68, 82, 83, 105, 108, 116, 120, and 123. The residue at position 124 (T124) is a Phosphothreonine. Phosphoserine is present on residues S126, S127, S135, and S143. Positions 159–176 (VRTRGSIKRRPPSRRFRR) are enriched in basic residues. 3 positions are modified to phosphoserine: S177, S179, and S216. Phosphothreonine occurs at positions 243 and 256. Over residues 248–258 (EKPEELVRTPE) the composition is skewed to basic and acidic residues. S297 carries the post-translational modification Phosphoserine. 2 stretches are compositionally biased toward basic and acidic residues: residues 298–312 (PREE…DTGK) and 319–330 (SEERVADEDRLG). A phosphoserine mark is found at S333 and S401.

Interacts with CAPZA2 and CAPZB. Dephosphorylation results in its dissociation from CAPZA2.

Its function is as follows. Stress-induced phosphorylation of CAPZIP may regulate the ability of F-actin-capping protein to remodel actin filament assembly. The sequence is that of CapZ-interacting protein (Rcsd1) from Mus musculus (Mouse).